The primary structure comprises 450 residues: Runt-related transcription factor 1 (450 aa).

The tract at residues 1-25 (MRIPVDASTSRRFTPPSTALSPGKM) is disordered. Residues 7–20 (ASTSRRFTPPSTAL) show a composition bias toward polar residues. Threonine 14 is modified (phosphothreonine). A Phosphoserine modification is found at serine 21. Lysine 24 and lysine 43 each carry N6-acetyllysine. The region spanning 50–178 (SMVEVLADHP…TVDGPREPRR (129 aa)) is the Runt domain. An interaction with DNA region spans residues 80 to 84 (RCNKT). Positions 112, 116, 139, and 170 each coordinate chloride. Interaction with DNA stretches follow at residues 135–143 (RFVGRSGRG) and 168–177 (ITVDGPREPR). Disordered regions lie at residues 170–195 (VDGPREPRRHRQKLDDQTKPGSLSFS) and 209–252 (MRVS…SPPW). A phosphoserine mark is found at serine 193 and serine 212. The segment covering 222 to 247 (PRASLNHSTAFNPQPQSQMQDARQIQ) has biased composition (polar residues). Serine 249 carries the post-translational modification Phosphoserine; by HIPK2. 2 positions are modified to phosphoserine: serine 266 and serine 267. Residue threonine 272 is modified to Phosphothreonine; by HIPK2. Serine 275 bears the Phosphoserine; by HIPK2 mark. The segment at 290-369 (SSRLSTAPDL…SQAQAGPFQT (80 aa)) is interaction with KAT6A. The residue at position 295 (threonine 295) is a Phosphothreonine. Residues 306 to 398 (RQFPTLPSIS…MVGGERSPPR (93 aa)) form an interaction with KAT6B region. The interaction with FOXP3 stretch occupies residues 360–400 (SQAQAGPFQTGSPSYHLYYGTSAGSYQFSMVGGERSPPRIL). Residues 410–450 (AALLNPSLPSQSDVVETEGSHSNSPTNMPPARLEEAVWRPY) are disordered. The segment covering 416 to 435 (SLPSQSDVVETEGSHSNSPT) has biased composition (polar residues). Position 433 is a phosphoserine (serine 433). Positions 441-450 (RLEEAVWRPY) are enriched in basic and acidic residues.

In terms of assembly, heterodimer with CBFB. RUNX1 binds DNA as a monomer and through the Runt domain. DNA-binding is increased by heterodimerization. Interacts with TLE1 and ALYREF/THOC4. Interacts with ELF1, ELF2 and SPI1. Interacts via its Runt domain with the ELF4 N-terminal region. Interaction with ELF2 isoform 2 (NERF-1a) may act to repress RUNX1-mediated transactivation. Interacts with KAT6A and KAT6B. Interacts with SUV39H1, leading to abrogation of transactivating and DNA-binding properties of RUNX1. Interacts with YAP1 and HIPK2. Interaction with CDK6 prevents myeloid differentiation, reducing its transcription transactivation activity. Found in a complex with PRMT5, RUNX1 and CBFB. Interacts with FOXP3. Interacts with TBX21. Interacts with DPF2. Post-translationally, phosphorylated in its C-terminus upon IL-6 treatment. Phosphorylation enhances interaction with KAT6A. Methylated. In terms of processing, phosphorylated in Ser-249 Thr-272 and Ser-275 by HIPK2 when associated with CBFB and DNA. This phosphorylation promotes subsequent EP300 phosphorylation. Expressed in skeletal muscle.

Its subcellular location is the nucleus. Its function is as follows. CBF binds to the core site, 5'-PYGPYGGT-3', of a number of enhancers and promoters, including murine leukemia virus, polyomavirus enhancer, T-cell receptor enhancers, LCK, IL-3 and GM-CSF promoters. The alpha subunit binds DNA and appears to have a role in the development of normal hematopoiesis. Isoform AML-1L interferes with the transactivation activity of RUNX1. Acts synergistically with ELF4 to transactivate the IL-3 promoter and with ELF2 to transactivate the BLK promoter. Inhibits KAT6B-dependent transcriptional activation. Controls the anergy and suppressive function of regulatory T-cells (Treg) by associating with FOXP3. Activates the expression of IL2 and IFNG and down-regulates the expression of TNFRSF18, IL2RA and CTLA4, in conventional T-cells. Positively regulates the expression of RORC in T-helper 17 cells. The sequence is that of Runt-related transcription factor 1 (Runx1) from Rattus norvegicus (Rat).